Reading from the N-terminus, the 157-residue chain is 2-C-methyl-D-erythritol 2,4-cyclodiphosphate synthase (157 aa).

Aspartate 8 and histidine 10 together coordinate a divalent metal cation. Residues 8–10 (DIH) and 35–36 (HS) contribute to the 4-CDP-2-C-methyl-D-erythritol 2-phosphate site. Histidine 43 contributes to the a divalent metal cation binding site. Residues 57–59 (DIG), 62–66 (FPNND), and lysine 142 contribute to the 4-CDP-2-C-methyl-D-erythritol 2-phosphate site.

Belongs to the IspF family. Homotrimer. A divalent metal cation serves as cofactor.

The enzyme catalyses 4-CDP-2-C-methyl-D-erythritol 2-phosphate = 2-C-methyl-D-erythritol 2,4-cyclic diphosphate + CMP. It functions in the pathway isoprenoid biosynthesis; isopentenyl diphosphate biosynthesis via DXP pathway; isopentenyl diphosphate from 1-deoxy-D-xylulose 5-phosphate: step 4/6. Its function is as follows. Involved in the biosynthesis of isopentenyl diphosphate (IPP) and dimethylallyl diphosphate (DMAPP), two major building blocks of isoprenoid compounds. Catalyzes the conversion of 4-diphosphocytidyl-2-C-methyl-D-erythritol 2-phosphate (CDP-ME2P) to 2-C-methyl-D-erythritol 2,4-cyclodiphosphate (ME-CPP) with a corresponding release of cytidine 5-monophosphate (CMP). This chain is 2-C-methyl-D-erythritol 2,4-cyclodiphosphate synthase, found in Wigglesworthia glossinidia brevipalpis.